A 491-amino-acid polypeptide reads, in one-letter code: Chromosomal replication initiator protein DnaA (491 aa).

Residues 1–69 are domain I, interacts with DnaA modulators; it reads MTTWDKCLKK…TIQECHGNDL (69 aa). The domain II stretch occupies residues 69–154; sequence LIIEYSNKKF…KEDEEYSFGL (86 aa). A domain III, AAA+ region region spans residues 155 to 371; that stretch reads PLKEKYVFDS…GALNRVLTTS (217 aa). ATP-binding residues include Gly199, Gly201, Lys202, and Thr203. The segment at 372 to 491 is domain IV, binds dsDNA; that stretch reads KFNHKDPTIE…YELLLNKISR (120 aa).

The protein belongs to the DnaA family. In terms of assembly, oligomerizes as a right-handed, spiral filament on DNA at oriC.

The protein resides in the cytoplasm. Plays an essential role in the initiation and regulation of chromosomal replication. ATP-DnaA binds to the origin of replication (oriC) to initiate formation of the DNA replication initiation complex once per cell cycle. Binds the DnaA box (a 9 base pair repeat at the origin) and separates the double-stranded (ds)DNA. Forms a right-handed helical filament on oriC DNA; dsDNA binds to the exterior of the filament while single-stranded (ss)DNA is stabiized in the filament's interior. The ATP-DnaA-oriC complex binds and stabilizes one strand of the AT-rich DNA unwinding element (DUE), permitting loading of DNA polymerase. After initiation quickly degrades to an ADP-DnaA complex that is not apt for DNA replication. Binds acidic phospholipids. This Francisella tularensis subsp. tularensis (strain WY96-3418) protein is Chromosomal replication initiator protein DnaA.